A 179-amino-acid chain; its full sequence is Large ribosomal subunit protein uL5 (179 aa).

The protein belongs to the universal ribosomal protein uL5 family. As to quaternary structure, part of the 50S ribosomal subunit; part of the 5S rRNA/L5/L18/L25 subcomplex. Contacts the 5S rRNA and the P site tRNA. Forms a bridge to the 30S subunit in the 70S ribosome.

Functionally, this is one of the proteins that bind and probably mediate the attachment of the 5S RNA into the large ribosomal subunit, where it forms part of the central protuberance. In the 70S ribosome it contacts protein S13 of the 30S subunit (bridge B1b), connecting the 2 subunits; this bridge is implicated in subunit movement. Contacts the P site tRNA; the 5S rRNA and some of its associated proteins might help stabilize positioning of ribosome-bound tRNAs. This is Large ribosomal subunit protein uL5 from Xylella fastidiosa (strain M12).